Consider the following 289-residue polypeptide: Phosphoribulokinase (289 aa).

12–20 provides a ligand contact to ATP; that stretch reads GSSGAGTTT.

This sequence belongs to the phosphoribulokinase family.

It catalyses the reaction D-ribulose 5-phosphate + ATP = D-ribulose 1,5-bisphosphate + ADP + H(+). The protein operates within carbohydrate biosynthesis; Calvin cycle. In Sinorhizobium medicae (strain WSM419) (Ensifer medicae), this protein is Phosphoribulokinase (cbbP).